The primary structure comprises 200 residues: 3-isopropylmalate dehydratase small subunit (200 aa).

It belongs to the LeuD family. LeuD type 1 subfamily. As to quaternary structure, heterodimer of LeuC and LeuD.

It catalyses the reaction (2R,3S)-3-isopropylmalate = (2S)-2-isopropylmalate. It functions in the pathway amino-acid biosynthesis; L-leucine biosynthesis; L-leucine from 3-methyl-2-oxobutanoate: step 2/4. In terms of biological role, catalyzes the isomerization between 2-isopropylmalate and 3-isopropylmalate, via the formation of 2-isopropylmaleate. This is 3-isopropylmalate dehydratase small subunit from Saccharopolyspora erythraea (strain ATCC 11635 / DSM 40517 / JCM 4748 / NBRC 13426 / NCIMB 8594 / NRRL 2338).